Here is a 134-residue protein sequence, read N- to C-terminus: Viral interleukin-8 homolog (134 aa).

An N-terminal signal peptide occupies residues 1–22; sequence MQALLLVLVLFIVQIYLLPGNG.

The protein belongs to the intercrine alpha (chemokine CxC) family. In terms of assembly, homodimer.

It localises to the secreted. Plays a role in the early phase of cytolytic infections presumably by recruiting host B or T-lymphocytes. This chain is Viral interleukin-8 homolog (MDV078), found in Gallus gallus (Chicken).